Consider the following 285-residue polypeptide: Shikimate dehydrogenase (NADP(+)) (285 aa).

Shikimate is bound by residues 22–24 and T71; that span reads SRS. The active-site Proton acceptor is the K75. The shikimate site is built by N96 and D111. Residues 136–140, 160–165, and I225 contribute to the NADP(+) site; these read GAGGA and NRTVGR. A shikimate-binding site is contributed by Y227. G248 is a binding site for NADP(+).

The protein belongs to the shikimate dehydrogenase family. Homodimer.

The catalysed reaction is shikimate + NADP(+) = 3-dehydroshikimate + NADPH + H(+). It participates in metabolic intermediate biosynthesis; chorismate biosynthesis; chorismate from D-erythrose 4-phosphate and phosphoenolpyruvate: step 4/7. Involved in the biosynthesis of the chorismate, which leads to the biosynthesis of aromatic amino acids. Catalyzes the reversible NADPH linked reduction of 3-dehydroshikimate (DHSA) to yield shikimate (SA). The chain is Shikimate dehydrogenase (NADP(+)) from Rhizobium etli (strain CIAT 652).